Consider the following 670-residue polypeptide: ATP-dependent RNA helicase DDX18 (670 aa).

Polar residues-rich tracts occupy residues 31-42 and 83-105; these read SNLTLSETQNGD and VTKS…SSNS. Residues 31-169 are disordered; the sequence is SNLTLSETQN…ESEVPSLPLG (139 aa). Basic and acidic residues predominate over residues 117–154; sequence MVNDAEPDTKKAKTENKGKSEEESAETTKETENNVEKP. Positions 179-207 match the Q motif motif; the sequence is FASLCNLVNENTLKAIKEMGFTNMTEIQH. The region spanning 210–385 is the Helicase ATP-binding domain; the sequence is IRPLLEGRDL…RISLKKEPLY (176 aa). 223 to 230 contributes to the ATP binding site; sequence AKTGSGKT. Positions 333 to 336 match the DEAD box motif; sequence DEAD. Positions 399 to 569 constitute a Helicase C-terminal domain; that stretch reads GLEQGYVVCP…DIQSQLEKLI (171 aa).

This sequence belongs to the DEAD box helicase family. DDX18/HAS1 subfamily. In terms of assembly, interacts with NOL8; the interaction is RNA-dependent. Interacts with PRC2 complex components EZH2, SUZ2 and JARID2; these interactions prevent deposition of the repressive H3K27me3 mark onto rDNA in pluripotent cells.

It localises to the nucleus. The protein localises to the nucleolus. It is found in the chromosome. The enzyme catalyses ATP + H2O = ADP + phosphate + H(+). In terms of biological role, ATP-dependent RNA helicase that plays a role in the regulation of R-loop homeostasis in both endogenous R-loop-prone regions and at sites of DNA damage. At endogenous loci such as actively transcribed genes, may act as a helicase to resolve the formation of R-loop during transcription and prevent the interference of R-loop with DNA-replication machinery. Also participates in the removal of DNA-lesion-associated R-loop. Plays an essential role for establishing pluripotency during embryogenesis and for pluripotency maintenance in embryonic stem cells. Mechanistically, prevents the polycomb repressive complex 2 (PRC2) from accessing rDNA loci and protects the active chromatin status in nucleolus. The chain is ATP-dependent RNA helicase DDX18 (DDX18) from Homo sapiens (Human).